The sequence spans 423 residues: Maltooligosaccharide ABC transporter solute-binding lipoprotein (423 aa).

An N-terminal signal peptide occupies residues 1–24; that stretch reads MSSKFMKSTAVLGTVTLASLLLVA. Cysteine 25 carries N-palmitoyl cysteine lipidation. Cysteine 25 carries S-diacylglycerol cysteine lipidation. Residues tyrosine 52, aspartate 77, aspartate 83, 103-104, glutamate 148, aspartate 193, asparagine 196, 251-254, tryptophan 274, and lysine 307 each bind substrate; these read DR and EGAG.

This sequence belongs to the bacterial solute-binding protein 1 family.

It localises to the cell membrane. In terms of biological role, part of an ABC transporter complex involved in the uptake of maltodextrins. Binds glycogen-derived linear maltooligosaccharides increasing in size from maltotriose to maltooctaose with the highest affinity for maltotriose. Has a very weak affinity for maltose. Has also a very low affinity for maltotetraitol, indicating that the binding is selective for maltooligosaccharides with an intact reducing end. In Streptococcus pneumoniae (strain ATCC BAA-255 / R6), this protein is Maltooligosaccharide ABC transporter solute-binding lipoprotein (malX).